Here is a 379-residue protein sequence, read N- to C-terminus: Proton extrusion protein PxcA (379 aa).

Helical transmembrane passes span 153-173 (TLVSLRILLLMILVPLLLQQI), 254-274 (AIKNVLADVVATIGFVLVCLF), 300-320 (FVIILFTDIFVGFHSPEGWTV), and 337-357 (FIDLFIATFPVILATIFKYWI).

The protein belongs to the CemA family.

It is found in the cell inner membrane. In terms of biological role, required for H(+) efflux immediately after light irradiation to form a rapid H(+) concentration gradient across the thylakoid membranes. Together with PxcL, contributes to transient H(+) uptake following dark to light transition. The sequence is that of Proton extrusion protein PxcA from Synechococcus sp. (strain RCC307).